The sequence spans 251 residues: tRNA pseudouridine synthase A (251 aa).

Asp-53 serves as the catalytic Nucleophile. Residue Tyr-110 participates in substrate binding.

The protein belongs to the tRNA pseudouridine synthase TruA family. Homodimer.

It catalyses the reaction uridine(38/39/40) in tRNA = pseudouridine(38/39/40) in tRNA. Its function is as follows. Formation of pseudouridine at positions 38, 39 and 40 in the anticodon stem and loop of transfer RNAs. The protein is tRNA pseudouridine synthase A of Mesoplasma florum (strain ATCC 33453 / NBRC 100688 / NCTC 11704 / L1) (Acholeplasma florum).